An 835-amino-acid polypeptide reads, in one-letter code: Cap-specific mRNA (nucleoside-2'-O-)-methyltransferase 1 (835 aa).

The short motif at 2 to 19 (RRRNDPECTAPIKKQKKR) is the Bipartite nuclear localization signal element. Positions 24–68 (ALNLSAASGDEPPSSVNHAAKASTTSLSGSDSETEGKQHGSDSFD) are disordered. Phosphoserine is present on residues Ser28, Ser31, Ser53, Ser66, and Ser91. Polar residues predominate over residues 37-54 (SSVNHAAKASTTSLSGSD). A compositionally biased stretch (basic and acidic residues) spans 57–68 (TEGKQHGSDSFD). The 47-residue stretch at 87–133 (YNSVSQKLMAKMGFREGEGLGKYSQGRKDIVEASNQKGRRGLGLTLQ) folds into the G-patch domain. At Lys108 the chain carries N6-acetyllysine. Substrate-binding positions include 203-207 (KSVFD) and Arg218. The RrmJ-type SAM-dependent 2'-O-MTase domain maps to 231–450 (FFLNRAAMKM…ERYVVCKGLK (220 aa)). Asn234 provides a ligand contact to S-adenosyl-L-methionine. Lys239 is a catalytic residue. Residues 277–283 (CAGPGGF) and 335–336 (DI) each bind S-adenosyl-L-methionine. Asp364 is an active-site residue. 374-376 (NLQ) lines the substrate pocket. Lys404 (proton acceptor) is an active-site residue. Residue Asn439 coordinates substrate. The interaction with POLR2A stretch occupies residues 727 to 835 (SSGTPKLSYT…VLSFIQTHSA (109 aa)). Residues 752 to 786 (RTVNEPWTMGFSKSFKRKFFYNKKTKISTFDLPAD) form the WW domain.

Interacts with POLR2A (via C-terminus).

The protein resides in the nucleus. The catalysed reaction is a 5'-end (N(7)-methyl 5'-triphosphoguanosine)-ribonucleoside in mRNA + S-adenosyl-L-methionine = a 5'-end (N(7)-methyl 5'-triphosphoguanosine)-(2'-O-methyl-ribonucleoside) in mRNA + S-adenosyl-L-homocysteine + H(+). S-adenosyl-L-methionine-dependent methyltransferase that mediates mRNA cap1 2'-O-ribose methylation to the 5'-cap structure of mRNAs. Methylates the ribose of the first nucleotide of a m(7)GpppG-capped mRNA and small nuclear RNA (snRNA) to produce m(7)GpppRm (cap1). Displays a preference for cap0 transcripts. Cap1 modification is linked to higher levels of translation. May be involved in the interferon response pathway. In Ailuropoda melanoleuca (Giant panda), this protein is Cap-specific mRNA (nucleoside-2'-O-)-methyltransferase 1 (CMTR1).